The chain runs to 120 residues: Spermidine export protein MdtJ (120 aa).

A run of 4 helical transmembrane segments spans residues M1–M21, A31–V51, I54–F74, and E81–I101.

This sequence belongs to the drug/metabolite transporter (DMT) superfamily. Small multidrug resistance (SMR) (TC 2.A.7.1) family. MdtJ subfamily. In terms of assembly, forms a complex with MdtI.

The protein localises to the cell inner membrane. In terms of biological role, catalyzes the excretion of spermidine. This chain is Spermidine export protein MdtJ, found in Salmonella paratyphi A (strain ATCC 9150 / SARB42).